A 678-amino-acid chain; its full sequence is UvrABC system protein B (678 aa).

A Helicase ATP-binding domain is found at 35–422; it reads EGVSDGLMFQ…ADNVVEQVVR (388 aa). 48–55 is an ATP binding site; sequence GVTGSGKT. Residues 101–124 carry the Beta-hairpin motif; sequence YYDYYQPEAYVPTRDLFIEKDSSI. The Helicase C-terminal domain maps to 439-605; that stretch reads QVDDLLGEIH…GVSKAVRELI (167 aa). In terms of domain architecture, UVR spans 633-668; the sequence is AREIRRLEKLMMDHARNLEFEQAAAARDALNALKSR.

Belongs to the UvrB family. Forms a heterotetramer with UvrA during the search for lesions. Interacts with UvrC in an incision complex.

The protein resides in the cytoplasm. Its function is as follows. The UvrABC repair system catalyzes the recognition and processing of DNA lesions. A damage recognition complex composed of 2 UvrA and 2 UvrB subunits scans DNA for abnormalities. Upon binding of the UvrA(2)B(2) complex to a putative damaged site, the DNA wraps around one UvrB monomer. DNA wrap is dependent on ATP binding by UvrB and probably causes local melting of the DNA helix, facilitating insertion of UvrB beta-hairpin between the DNA strands. Then UvrB probes one DNA strand for the presence of a lesion. If a lesion is found the UvrA subunits dissociate and the UvrB-DNA preincision complex is formed. This complex is subsequently bound by UvrC and the second UvrB is released. If no lesion is found, the DNA wraps around the other UvrB subunit that will check the other stand for damage. The chain is UvrABC system protein B from Bordetella pertussis (strain Tohama I / ATCC BAA-589 / NCTC 13251).